Reading from the N-terminus, the 92-residue chain is Acylphosphatase (92 aa).

One can recognise an Acylphosphatase-like domain in the interval 5 to 92; sequence RAHVFISGRV…GKEGIFTIVW (88 aa). Active-site residues include arginine 20 and asparagine 38.

This sequence belongs to the acylphosphatase family.

The enzyme catalyses an acyl phosphate + H2O = a carboxylate + phosphate + H(+). This chain is Acylphosphatase (acyP), found in Chloroflexus aurantiacus (strain ATCC 29366 / DSM 635 / J-10-fl).